The following is a 247-amino-acid chain: MSDDLKQVVNQLQDRITQLEKKAGIVPNVPKSIRMVLIGPPGAGKGTQAPNLKEKFCACHLATGDMLRAQVTAKTELGVQAKKIMDQGGLVSDEIMVNMIKSELENNKECSQGFILDGFPRTIPQAEKLDSMLEDRKTPLQKAVELKIEDQLLVDRITGRLVHPASGRSYHKLFNPPKKEMTDDQTGEPLVQRSDDNEEALKKRLGTYHKQTEPIVEYYKKSGIWSGIDASQKPSKVWTDILKCLGQ.

42-47 (GAGKGT) contacts ATP. The tract at residues 62-91 (ATGDMLRAQVTAKTELGVQAKKIMDQGGLV) is NMP. AMP contacts are provided by residues Thr-63, Arg-68, 89–91 (GLV), 118–121 (GFPR), and Gln-125. Positions 159 to 196 (GRLVHPASGRSYHKLFNPPKKEMTDDQTGEPLVQRSDD) are LID. Residues Arg-160 and 169-170 (SY) contribute to the ATP site. Positions 169–191 (SYHKLFNPPKKEMTDDQTGEPLV) are disordered. 2 residues coordinate AMP: Arg-193 and Arg-204. Residue Gln-232 coordinates ATP.

It belongs to the adenylate kinase family. AK2 subfamily. In terms of assembly, monomer.

It localises to the cytoplasm. It is found in the cytosol. The protein resides in the mitochondrion intermembrane space. It catalyses the reaction AMP + ATP = 2 ADP. Functionally, catalyzes the reversible transfer of the terminal phosphate group between ATP and AMP. Plays an important role in cellular energy homeostasis and in adenine nucleotide metabolism. Adenylate kinase activity is critical for regulation of the phosphate utilization and the AMP de novo biosynthesis pathways. The sequence is that of Adenylate kinase from Meyerozyma guilliermondii (strain ATCC 6260 / CBS 566 / DSM 6381 / JCM 1539 / NBRC 10279 / NRRL Y-324) (Yeast).